Consider the following 85-residue polypeptide: MKVTLIAILTCAAVLVLHTTAAEELEAESQPMEVGMPDTELAAVDEERLFECSVSCEIEKEGNKDCKKKKCKGGWKCKFNMCVKV.

Residues 1-22 (MKVTLIAILTCAAVLVLHTTAA) form the signal peptide. Residues 23 to 48 (EELEAESQPMEVGMPDTELAAVDEER) constitute a propeptide that is removed on maturation. 3 cysteine pairs are disulfide-bonded: cysteine 52–cysteine 66, cysteine 56–cysteine 77, and cysteine 71–cysteine 82.

It belongs to the neurotoxin 12 (Hwtx-2) family. 02 (Hwtx-2) subfamily. In terms of assembly, monomer. In terms of tissue distribution, expressed by the venom gland.

It is found in the secreted. In terms of biological role, neurotoxin active on both insects and mammals. The protein is U4-theraphotoxin-Hhn1a of Cyriopagopus hainanus (Chinese bird spider).